A 332-amino-acid chain; its full sequence is L-lactate dehydrogenase A chain (332 aa).

Residue Ala-2 is modified to N-acetylalanine. N6-acetyllysine; alternate is present on Lys-5. Lys-5 is subject to N6-succinyllysine; alternate. Lys-14 carries the post-translational modification N6-acetyllysine. 29 to 57 is an NAD(+) binding site; the sequence is GAVGMACAISILMKDLADELALVDVMEDK. Lys-57 is modified (N6-acetyllysine; alternate). Lys-57 participates in a covalent cross-link: Glycyl lysine isopeptide (Lys-Gly) (interchain with G-Cter in SUMO2); alternate. Lys-81 is subject to N6-acetyllysine. Position 99 (Arg-99) interacts with NAD(+). Residue Arg-106 coordinates substrate. Residue Lys-118 is modified to N6-acetyllysine; alternate. Lys-118 is subject to N6-succinyllysine; alternate. Lys-126 carries the N6-acetyllysine modification. Position 138 (Asn-138) interacts with NAD(+). Positions 138 and 169 each coordinate substrate. The Proton acceptor role is filled by His-193. An N6-acetyllysine mark is found at Lys-224 and Lys-232. A Phosphotyrosine modification is found at Tyr-239. Lys-243 is subject to N6-acetyllysine. Residue Thr-248 participates in substrate binding. Thr-309 bears the Phosphothreonine mark. Lys-318 carries the post-translational modification N6-acetyllysine; alternate. Residue Lys-318 is modified to N6-succinyllysine; alternate. Thr-322 is modified (phosphothreonine).

Belongs to the LDH/MDH superfamily. LDH family. Homotetramer. Interacts with PTEN upstream reading frame protein MP31. ISGylated.

Its subcellular location is the cytoplasm. The catalysed reaction is (S)-lactate + NAD(+) = pyruvate + NADH + H(+). It functions in the pathway fermentation; pyruvate fermentation to lactate; (S)-lactate from pyruvate: step 1/1. Interconverts simultaneously and stereospecifically pyruvate and lactate with concomitant interconversion of NADH and NAD(+). In Mus musculus (Mouse), this protein is L-lactate dehydrogenase A chain (Ldha).